Reading from the N-terminus, the 250-residue chain is DNA repair protein RecO (250 aa).

The protein belongs to the RecO family.

In terms of biological role, involved in DNA repair and RecF pathway recombination. This Thermodesulfovibrio yellowstonii (strain ATCC 51303 / DSM 11347 / YP87) protein is DNA repair protein RecO.